Here is a 485-residue protein sequence, read N- to C-terminus: Pre-glycoprotein polyprotein GP complex (485 aa).

Gly2 carries N-myristoyl glycine; by host lipidation. Over 2-17 the chain is Extracellular; that stretch reads GQLISFFGEIPTILQE. The helical transmembrane segment at 18–33 threads the bilayer; sequence ALNIALIAVSIIATIK. Topologically, residues 34 to 58 are cytoplasmic; sequence GVVNVWKSGLIQLLMFVMLAGRSCS. A Zn(2+)-binding site is contributed by Cys57. The Extracellular segment spans residues 59-424; sequence VQIGHHLELE…QGRTPLSLVD (366 aa). Cystine bridges form between Cys85–Cys225, Cys271–Cys284, Cys293–Cys302, and Cys356–Cys377. N-linked (GlcNAc...) asparagine; by host glycans are attached at residues Asn88, Asn128, Asn179, and Asn218. N-linked (GlcNAc...) asparagine; by host glycans are attached at residues Asn357, Asn365, Asn382, and Asn387. Residues 425-445 form a helical membrane-spanning segment; the sequence is VCFWSTLFYTASIFLHLIRIP. Residues 446–485 lie on the Cytoplasmic side of the membrane; the sequence is THRHIVGEGCPKPHRLRADSTCACGLYKQKRRPLKWVRSN. Zn(2+)-binding residues include His447, His449, Cys455, His459, Cys467, and Cys469.

This sequence belongs to the arenaviridae GPC protein family. Interacts with glycoprotein G2. Part of the GP complex (GP-C) together with glycoprotein G1 and glycoprotein G2. The GP-complex interacts with protein Z, which interacts with ribonucleocapsid; these interactions may induce virion budding. In terms of assembly, homotrimer; disulfide-linked. In pre-fusion state, G1 homotrimers bind G2 homotrimers via ionic interactions. Part of the GP complex (GP-C) together with glycoprotein G2 and the stable signal peptide. The GP-complex interacts with protein Z, which interacts with ribonucleocapsid; these interactions may induce virion budding. As to quaternary structure, homotrimer. Interacts with the stable signal peptide. In pre-fusion state, G2 homotrimers bind G1 homotrimers via ionic interactions. Part of the GP complex (GP-C) together with glycoprotein G1 and the stable signal peptide. Acidification in the endosome triggers rearrangements, which ultimately leads to a 6 helix bundle formed by the two heptad repeat domains (HR1 and HR2) in post-fusion state. The GP-complex interacts with protein Z, which interacts with ribonucleocapsid; these interactions may induce virion budding. In terms of processing, specific enzymatic cleavages in vivo yield mature proteins. GP-C polyprotein is cleaved in the endoplasmic reticulum by the host protease MBTPS1. Only cleaved glycoprotein is incorporated into virions. Post-translationally, the SSP remains stably associated with the GP complex following cleavage by signal peptidase and plays crucial roles in the trafficking of GP through the secretory pathway. Myristoylation is necessary for GP2-mediated fusion activity.

The protein resides in the virion membrane. It localises to the host endoplasmic reticulum membrane. It is found in the host Golgi apparatus membrane. Its subcellular location is the host cell membrane. Functions as a cleaved signal peptide that is retained as the third component of the GP complex (GP-C). Helps to stabilize the spike complex in its native conformation. The SSP is required for efficient glycoprotein expression, post-translational maturation cleavage of G1 and G2, glycoprotein transport to the cell surface plasma membrane, formation of infectious virus particles, and acid pH-dependent glycoprotein-mediated cell fusion. In terms of biological role, forms the virion spikes together with glycoprotein G2. The glycoprotein spike trimers are connected to the underlying matrix. Interacts with the host receptor leading to virus endocytosis. Its function is as follows. Forms the virion spikes together with glycoprotein G1. The glycoprotein spike trimers are connected to the underlying matrix. Class I viral fusion protein that directs fusion of viral and host endosomal membranes, leading to delivery of the nucleocapsid into the cytoplasm. Membrane fusion is mediated by irreversible conformational changes induced by acidification. The chain is Pre-glycoprotein polyprotein GP complex from Sigmodon hispidus (Hispid cotton rat).